We begin with the raw amino-acid sequence, 114 residues long: Probable acid stress chaperone HdeA (114 aa).

An N-terminal signal peptide occupies residues 1–26; that stretch reads MIKALFNKNTALAAVTILALSGGAMA. Cysteine 46 and cysteine 94 are oxidised to a cystine.

It belongs to the HdeA family.

It localises to the periplasm. Functionally, required for optimal acid stress protection. Exhibits a chaperone-like activity only at low pH by suppressing non-specifically the aggregation of denaturated periplasmic proteins. This is Probable acid stress chaperone HdeA from Brucella suis biovar 1 (strain 1330).